The sequence spans 339 residues: Fructose-1,6-bisphosphatase, cytosolic (339 aa).

The Mg(2+) site is built by Glu70, Glu99, Asp120, Leu122, and Asp123. Residues 123–126 (DGSS), Asn214, Tyr246, Tyr266, and Lys276 each bind substrate. Residue Glu282 coordinates Mg(2+).

The protein belongs to the FBPase class 1 family. The cofactor is Mg(2+).

The protein resides in the cytoplasm. It carries out the reaction beta-D-fructose 1,6-bisphosphate + H2O = beta-D-fructose 6-phosphate + phosphate. This chain is Fructose-1,6-bisphosphatase, cytosolic, found in Brassica napus (Rape).